Reading from the N-terminus, the 401-residue chain is Exodeoxyribonuclease 7 large subunit (401 aa).

Belongs to the XseA family. As to quaternary structure, heterooligomer composed of large and small subunits.

It localises to the cytoplasm. The enzyme catalyses Exonucleolytic cleavage in either 5'- to 3'- or 3'- to 5'-direction to yield nucleoside 5'-phosphates.. In terms of biological role, bidirectionally degrades single-stranded DNA into large acid-insoluble oligonucleotides, which are then degraded further into small acid-soluble oligonucleotides. The polypeptide is Exodeoxyribonuclease 7 large subunit (Thermoanaerobacter pseudethanolicus (strain ATCC 33223 / 39E) (Clostridium thermohydrosulfuricum)).